A 529-amino-acid chain; its full sequence is DEP domain-containing protein 1B (529 aa).

Residues 24-108 enclose the DEP domain; it reads FRAKMPLRKH…DNRHLYRFPP (85 aa). Ser-160 bears the Phosphoserine mark. The Rho-GAP domain occupies 201–393; the sequence is DSLEEVLDVK…FLMDNYQEIL (193 aa). Position 436 is a phosphoserine (Ser-436).

The polypeptide is DEP domain-containing protein 1B (DEPDC1B) (Homo sapiens (Human)).